A 120-amino-acid polypeptide reads, in one-letter code: Ribosome-binding factor A (120 aa).

Belongs to the RbfA family. In terms of assembly, monomer. Binds 30S ribosomal subunits, but not 50S ribosomal subunits or 70S ribosomes.

It is found in the cytoplasm. Its function is as follows. One of several proteins that assist in the late maturation steps of the functional core of the 30S ribosomal subunit. Associates with free 30S ribosomal subunits (but not with 30S subunits that are part of 70S ribosomes or polysomes). Required for efficient processing of 16S rRNA. May interact with the 5'-terminal helix region of 16S rRNA. The protein is Ribosome-binding factor A of Chlorobaculum parvum (strain DSM 263 / NCIMB 8327) (Chlorobium vibrioforme subsp. thiosulfatophilum).